We begin with the raw amino-acid sequence, 209 residues long: Large ribosomal subunit protein uL3 (209 aa).

N5-methylglutamine is present on Q150.

It belongs to the universal ribosomal protein uL3 family. In terms of assembly, part of the 50S ribosomal subunit. Forms a cluster with proteins L14 and L19. In terms of processing, methylated by PrmB.

Functionally, one of the primary rRNA binding proteins, it binds directly near the 3'-end of the 23S rRNA, where it nucleates assembly of the 50S subunit. In Ectopseudomonas mendocina (strain ymp) (Pseudomonas mendocina), this protein is Large ribosomal subunit protein uL3.